The primary structure comprises 246 residues: Hsp70 nucleotide exchange factor fes-1 (246 aa).

Polar residues predominate over residues 23–40 (QSYHSNGAPTPNNNSGPA). The tract at residues 23-63 (QSYHSNGAPTPNNNSGPATGTGAVATSPAPQVTGSGPRPVD) is disordered. ARM repeat units follow at residues 48–92 (TSPA…DPSP), 113–152 (LDNA…TAVQ), 155–196 (QKTQ…SAVR), and 214–244 (HEVL…NKAK).

This sequence belongs to the FES1 family.

The protein resides in the cytoplasm. Functionally, functions as a nucleotide exchange factor (NEF) for Hsp70 chaperones which accelerates the release of ADP. Required for fully efficient Hsp70-mediated folding of proteins. The protein is Hsp70 nucleotide exchange factor fes-1 (fes-1) of Neurospora crassa (strain ATCC 24698 / 74-OR23-1A / CBS 708.71 / DSM 1257 / FGSC 987).